Reading from the N-terminus, the 301-residue chain is 2-aminobenzoylacetyl-CoA thioesterase (301 aa).

Fe cation is bound by residues His69, His71, Asp73, His74, His159, Asp178, and His221.

The protein belongs to the metallo-beta-lactamase superfamily.

It carries out the reaction (2-aminobenzoyl)acetyl-CoA + H2O = (2-aminobenzoyl)acetate + CoA + H(+). Its activity is regulated as follows. Thioesterase activity, but not pyocyanine production, is inhibited by 2-(pyridin-3-yl)benzoic acid, 2-(1H-pyrrol-1-yl)benzoic acid and 3-methylthiophene-2-carboxylic acid. Compounds bind to the active center. Its function is as follows. Required for the biosynthesis of the quorum-sensing signaling molecules 2-heptyl-4(1H)-quinolone (HHQ) and 2-heptyl-3-hydroxy-4(1H)-quinolone (Pseudomonas quinolone signal or PQS), which are important for biofilm formation and virulence. Catalyzes the hydrolysis of the intermediate 2-aminobenzoylacetyl-CoA (2-ABA-CoA) to form 2-aminobenzoylacetate (2-ABA), the precursor of HHQ. In vitro, can also hydrolyze other substrates such as S-ethyl-acetothioacetate and acetoacetyl-CoA, but is inactive against anthraniloyl-CoA, malonyl-CoA and octanoyl-CoA. Beyond its thioesterase function, is involved in the regulation of diverse genes coding for key virulence determinants and biofilm development. This is 2-aminobenzoylacetyl-CoA thioesterase from Pseudomonas aeruginosa (strain ATCC 15692 / DSM 22644 / CIP 104116 / JCM 14847 / LMG 12228 / 1C / PRS 101 / PAO1).